We begin with the raw amino-acid sequence, 93 residues long: Vacuolar ATPase assembly integral membrane protein VMA21 (93 aa).

Residues 1-21 lie on the Cytoplasmic side of the membrane; sequence MSNRVSTGKMAMAPQESVQPA. A helical membrane pass occupies residues 22 to 42; the sequence is VLYKLVLFALLMAVVPIGTYF. The Lumenal portion of the chain corresponds to 43–54; that stretch reads STLNYLWDGSTT. Residues 55–75 traverse the membrane as a helical segment; it reads FAAISAIAAANLILVGYVVVA. The Cytoplasmic segment spans residues 76 to 93; sequence FREDAASRTGPLPEKKTS. The short motif at 90–93 is the Prevents secretion from ER element; that stretch reads KKTS.

Belongs to the VMA21 family.

It is found in the endoplasmic reticulum membrane. The protein localises to the endoplasmic reticulum-Golgi intermediate compartment membrane. The protein resides in the cytoplasmic vesicle. It localises to the COPII-coated vesicle membrane. Required for the assembly of the V0 complex of the vacuolar ATPase (V-ATPase) in the endoplasmic reticulum. The chain is Vacuolar ATPase assembly integral membrane protein VMA21 from Cryptococcus neoformans var. neoformans serotype D (strain JEC21 / ATCC MYA-565) (Filobasidiella neoformans).